The chain runs to 55 residues: uncharacterized protein (55 aa).

This is an uncharacterized protein from Homo sapiens (Human).